Reading from the N-terminus, the 153-residue chain is Ribosome maturation factor RimP (153 aa).

The protein belongs to the RimP family.

Its subcellular location is the cytoplasm. Its function is as follows. Required for maturation of 30S ribosomal subunits. This is Ribosome maturation factor RimP from Clostridium botulinum (strain Okra / Type B1).